The chain runs to 205 residues: Adenylyl-sulfate kinase (205 aa).

31 to 38 (GLSGSGKS) contributes to the ATP binding site. Residue Ser-105 is the Phosphoserine intermediate of the active site.

It belongs to the APS kinase family.

The enzyme catalyses adenosine 5'-phosphosulfate + ATP = 3'-phosphoadenylyl sulfate + ADP + H(+). Its pathway is sulfur metabolism; hydrogen sulfide biosynthesis; sulfite from sulfate: step 2/3. In terms of biological role, catalyzes the synthesis of activated sulfate. This Shewanella pealeana (strain ATCC 700345 / ANG-SQ1) protein is Adenylyl-sulfate kinase.